A 157-amino-acid chain; its full sequence is MSDEEHTFETADAGSSATYPMQCSALRKNGFVVIKSRPCKIVDMSTSKTGKHGHAKVHLVAIDIFTGKKLEDLSPSTHNMEVPVVKRNEYQLLDIDDGFLSLMNMDGDTKDDVKAPEGELGDSLQTAFDEGKDLMVTIISAMGEEAAISFKEAARTD.

S2 carries the N-acetylserine modification. S2 carries the phosphoserine modification. Phosphothreonine is present on residues T7 and T10. Residue K51 is modified to Hypusine. Position 74 is a phosphoserine (S74). Residue K86 forms a Glycyl lysine isopeptide (Lys-Gly) (interchain with G-Cter in ubiquitin) linkage.

It belongs to the eIF-5A family. Homodimer. Binds to 80S ribosomes. Actively translating ribosomes show mutually exclusive binding of eIF5a (HYP2 or ANB1) and EFT1/eEF2. Interacts with DYS1 and LIA1. Post-translationally, lys-51 undergoes hypusination, a unique post-translational modification that consists in the addition of a butylamino group from spermidine to lysine side chain, leading to the formation of the unusual amino acid hypusine. eIF-5As are the only known proteins to undergo this modification, which is essential for their function.

The protein resides in the cytoplasm. Functionally, translation factor that promotes translation elongation and termination, particularly upon ribosome stalling at specific amino acid sequence contexts. Binds between the exit (E) and peptidyl (P) site of the ribosome and promotes rescue of stalled ribosome: specifically required for efficient translation of polyproline-containing peptides as well as other motifs that stall the ribosome. Acts as a ribosome quality control (RQC) cofactor by joining the RQC complex to facilitate peptidyl transfer during CAT tailing step. Involved in actin dynamics and cell cycle progression, mRNA decay and probably in a pathway involved in stress response and maintenance of cell wall integrity. In Saccharomyces cerevisiae (strain ATCC 204508 / S288c) (Baker's yeast), this protein is Eukaryotic translation initiation factor 5A-1 (HYP2).